Here is a 145-residue protein sequence, read N- to C-terminus: uncharacterized protein (145 aa).

The helical transmembrane segment at 1-21 (MWFLVKATFWFSLVLVLLPFL) threads the bilayer. The segment at 109-145 (TPAESVPSAEATEKAEPAFKRMPVPEHRLDPGPASGK) is disordered. A compositionally biased stretch (basic and acidic residues) spans 119–138 (ATEKAEPAFKRMPVPEHRLD).

It localises to the membrane. This is an uncharacterized protein from Rhizobium meliloti (strain 1021) (Ensifer meliloti).